We begin with the raw amino-acid sequence, 207 residues long: Macrophage immunometabolism regulator (207 aa).

Position 1 is an N-acetylmethionine (Met1). A disordered region spans residues 1–41; sequence MEVDINGDSRSTLTTLPLPVAEGSSPGKAEAEKPRCSSTPC. 2 positions are modified to phosphoserine: Ser25 and Ser167.

Belongs to the UNC119-binding protein family. As to quaternary structure, interacts with UNC119 and UNC119B; interaction preferentially takes place when UNC119 and UNC119B are unliganded with myristoylated proteins. In terms of tissue distribution, highly expressed in photoreceptors.

It localises to the cytoplasm. The protein localises to the cell projection. It is found in the cilium. Regulates the macrophage function, by enhancing the resolution of inflammation and wound repair functions mediated by M2 macrophages. The regulation of macrophage function is, due at least in part, to its ability to inhibit glycolysis. May also play a role in trafficking of proteins via its interaction with UNC119 and UNC119B cargo adapters: may help the release of UNC119 and UNC119B cargo or the recycling of UNC119 and UNC119B. May play a role in ciliary membrane localization via its interaction with UNC119B and protein transport into photoreceptor cells. The protein is Macrophage immunometabolism regulator of Mus musculus (Mouse).